The chain runs to 439 residues: Gnt-II system L-idonate transporter (439 aa).

Topologically, residues Met-1 to Ala-11 are periplasmic. A helical membrane pass occupies residues Leu-12 to Val-34. Residues Val-35–Gly-53 lie on the Cytoplasmic side of the membrane. The chain crosses the membrane as a helical span at residues Ile-54–Ser-76. Over Asp-77 to Arg-96 the chain is Periplasmic. Residues Val-97 to Phe-114 form a helical membrane-spanning segment. Residues Glu-115–Phe-118 are Cytoplasmic-facing. A helical transmembrane segment spans residues Val-119–Val-141. Topologically, residues Pro-142 to Asn-170 are periplasmic. Residues Leu-171–Phe-193 form a helical membrane-spanning segment. The Cytoplasmic portion of the chain corresponds to Ser-194–Glu-218. A helical membrane pass occupies residues Met-219 to Val-241. Residues Cys-242 to Arg-253 lie on the Periplasmic side of the membrane. The chain crosses the membrane as a helical span at residues Leu-254 to Thr-276. Residues Leu-277–Asp-290 lie on the Cytoplasmic side of the membrane. The helical transmembrane segment at Ile-291–Gly-310 threads the bilayer. The Periplasmic segment spans residues Ala-311 to Gly-322. A helical membrane pass occupies residues His-323–Ala-345. Residues Leu-346–Arg-348 lie on the Cytoplasmic side of the membrane. The helical transmembrane segment at Ile-349 to Val-371 threads the bilayer. Residues Thr-372–Ala-377 are Periplasmic-facing. Residues Leu-378–Leu-400 traverse the membrane as a helical segment. The Cytoplasmic segment spans residues Phe-401–Arg-414. Residues Thr-415–Val-437 form a helical membrane-spanning segment. Topologically, residues Leu-438–His-439 are periplasmic.

This sequence belongs to the GntP permease family.

It localises to the cell inner membrane. The enzyme catalyses L-idonate(in) + H(+)(in) = L-idonate(out) + H(+)(out). It catalyses the reaction D-gluconate(in) + H(+)(in) = D-gluconate(out) + H(+)(out). It carries out the reaction 5-dehydro-D-gluconate(in) + H(+)(in) = 5-dehydro-D-gluconate(out) + H(+)(out). It functions in the pathway carbohydrate acid metabolism; L-idonate degradation. Transporter which is probably involved in L-idonate metabolism. Transports L-idonate from the periplasm across the inner membrane. Can also transport D-gluconate and 5-keto-D-gluconate. It has been reported that gluconate uptake probably occurs via a proton-symport mechanism in E.coli. In Escherichia coli (strain K12), this protein is Gnt-II system L-idonate transporter.